The primary structure comprises 417 residues: Gamma-glutamyl phosphate reductase (417 aa).

This sequence belongs to the gamma-glutamyl phosphate reductase family.

It localises to the cytoplasm. The enzyme catalyses L-glutamate 5-semialdehyde + phosphate + NADP(+) = L-glutamyl 5-phosphate + NADPH + H(+). Its pathway is amino-acid biosynthesis; L-proline biosynthesis; L-glutamate 5-semialdehyde from L-glutamate: step 2/2. In terms of biological role, catalyzes the NADPH-dependent reduction of L-glutamate 5-phosphate into L-glutamate 5-semialdehyde and phosphate. The product spontaneously undergoes cyclization to form 1-pyrroline-5-carboxylate. The sequence is that of Gamma-glutamyl phosphate reductase from Enterobacter sp. (strain 638).